The following is a 394-amino-acid chain: Elongation factor Tu (394 aa).

The 195-residue stretch at 10–204 folds into the tr-type G domain; it reads KPHINIGTIG…AVDDNIPTPE (195 aa). The interval 19 to 26 is G1; it reads GHVDHGKT. Residue 19–26 participates in GTP binding; it reads GHVDHGKT. Mg(2+) is bound at residue Thr-26. The interval 60–64 is G2; the sequence is GITIN. Residues 81 to 84 are G3; the sequence is DCPG. GTP is bound by residues 81–85 and 136–139; these read DCPGH and NKID. Residues 136–139 are G4; it reads NKID. Residues 174–176 form a G5 region; that stretch reads SAL.

This sequence belongs to the TRAFAC class translation factor GTPase superfamily. Classic translation factor GTPase family. EF-Tu/EF-1A subfamily. Monomer.

It is found in the cytoplasm. The enzyme catalyses GTP + H2O = GDP + phosphate + H(+). GTP hydrolase that promotes the GTP-dependent binding of aminoacyl-tRNA to the A-site of ribosomes during protein biosynthesis. The chain is Elongation factor Tu from Chlamydia trachomatis serovar L2 (strain ATCC VR-902B / DSM 19102 / 434/Bu).